The following is a 65-amino-acid chain: Small ribosomal subunit protein eS27 (65 aa).

C20, C23, C39, and C42 together coordinate Zn(2+). Residues 20 to 42 form a C4-type zinc finger; it reads CIDCGNEQIVFSHPATKVRCLVC.

This sequence belongs to the eukaryotic ribosomal protein eS27 family. Part of the 30S ribosomal subunit. The cofactor is Zn(2+).

This Thermococcus gammatolerans (strain DSM 15229 / JCM 11827 / EJ3) protein is Small ribosomal subunit protein eS27.